A 414-amino-acid polypeptide reads, in one-letter code: Cyclohex-1-ene-1-carbonyl-CoA dehydrogenase (414 aa).

D124 (proton acceptor) is an active-site residue. FAD-binding residues include A157, T158, S164, and T190. S164 is a cyclohex-1-ene-1-carbonyl-CoA binding site. S164 lines the cyclohexa-1,5-diene-1-carbonyl-CoA pocket. Residues K211, R275, and T396 each contribute to the cyclohex-1-ene-1-carbonyl-CoA site. The cyclohexa-1,5-diene-1-carbonyl-CoA site is built by K211, R275, and T396. FAD contacts are provided by T398 and Q400. Position 408 (R408) interacts with cyclohex-1-ene-1-carbonyl-CoA. A cyclohexa-1,5-diene-1-carbonyl-CoA-binding site is contributed by R408.

This sequence belongs to the acyl-CoA dehydrogenase family. As to quaternary structure, homotetramer. FAD is required as a cofactor.

It carries out the reaction cyclohex-1-ene-1-carbonyl-CoA + oxidized [electron-transfer flavoprotein] + H(+) = cyclohexa-1,5-diene-1-carbonyl-CoA + reduced [electron-transfer flavoprotein]. Mediates the conversion of cyclohex-1-ene-1-carbonyl-CoA (Ch1CoA) into (E)-2-cyclohex-1,5-diene-1-carbonyl-CoA in biosynthesis of cyclohexane-1-carboxylate, a by-product produced during fermentation of benzoate and crotonate to acetate. Also able to further convert (E)-2-cyclohex-1,5-diene-1-carbonyl-CoA to benzoyl-CoA. The polypeptide is Cyclohex-1-ene-1-carbonyl-CoA dehydrogenase (Syntrophus aciditrophicus (strain SB)).